The sequence spans 273 residues: Thioredoxin-like 1-3, chloroplastic (273 aa).

The N-terminal 44 residues, 1–44, are a transit peptide targeting the chloroplast; sequence MATDSFIKLNPISFNRARFDLRDFAGISPKSISSLCCISPRLIS. The Thioredoxin domain maps to 62–202; the sequence is LFSKKKIPAF…FKEALEKHGR (141 aa). Catalysis depends on nucleophile residues Cys-125 and Cys-128. Cys-125 and Cys-128 are joined by a disulfide.

The protein belongs to the thioredoxin family.

It is found in the plastid. Its subcellular location is the chloroplast. Functionally, probable thiol-disulfide oxidoreductase that may participate in various redox reactions. The chain is Thioredoxin-like 1-3, chloroplastic from Arabidopsis thaliana (Mouse-ear cress).